The following is an 897-amino-acid chain: Leucine--tRNA ligase (897 aa).

A 'HIGH' region motif is present at residues 42 to 52; the sequence is PYPSGKLHMGH. Residues 645-649 carry the 'KMSKS' region motif; that stretch reads TMSKS. An ATP-binding site is contributed by Lys-648.

The protein belongs to the class-I aminoacyl-tRNA synthetase family.

The protein localises to the cytoplasm. It carries out the reaction tRNA(Leu) + L-leucine + ATP = L-leucyl-tRNA(Leu) + AMP + diphosphate. In Paracidovorax citrulli (strain AAC00-1) (Acidovorax citrulli), this protein is Leucine--tRNA ligase.